We begin with the raw amino-acid sequence, 170 residues long: ATP synthase subunit b (170 aa).

The helical transmembrane segment at 25 to 45 (LIPNGTFFAVLIIFLIVLGVI) threads the bilayer. The segment at 121–147 (EVAQTLTQADQQLSAQGDQVRSGLESS) is disordered. Polar residues predominate over residues 122–139 (VAQTLTQADQQLSAQGDQ).

The protein belongs to the ATPase B chain family. As to quaternary structure, F-type ATPases have 2 components, F(1) - the catalytic core - and F(0) - the membrane proton channel. F(1) has five subunits: alpha(3), beta(3), gamma(1), delta(1), epsilon(1). F(0) has three main subunits: a(1), b(2) and c(10-14). The alpha and beta chains form an alternating ring which encloses part of the gamma chain. F(1) is attached to F(0) by a central stalk formed by the gamma and epsilon chains, while a peripheral stalk is formed by the delta and b chains.

It localises to the cell membrane. F(1)F(0) ATP synthase produces ATP from ADP in the presence of a proton or sodium gradient. F-type ATPases consist of two structural domains, F(1) containing the extramembraneous catalytic core and F(0) containing the membrane proton channel, linked together by a central stalk and a peripheral stalk. During catalysis, ATP synthesis in the catalytic domain of F(1) is coupled via a rotary mechanism of the central stalk subunits to proton translocation. In terms of biological role, component of the F(0) channel, it forms part of the peripheral stalk, linking F(1) to F(0). The polypeptide is ATP synthase subunit b (Mycolicibacterium smegmatis (strain ATCC 700084 / mc(2)155) (Mycobacterium smegmatis)).